The following is a 175-amino-acid chain: Large ribosomal subunit protein uL10 (175 aa).

The protein belongs to the universal ribosomal protein uL10 family. As to quaternary structure, part of the ribosomal stalk of the 50S ribosomal subunit. The N-terminus interacts with L11 and the large rRNA to form the base of the stalk. The C-terminus forms an elongated spine to which L12 dimers bind in a sequential fashion forming a multimeric L10(L12)X complex.

Functionally, forms part of the ribosomal stalk, playing a central role in the interaction of the ribosome with GTP-bound translation factors. The chain is Large ribosomal subunit protein uL10 from Prochlorococcus marinus (strain MIT 9313).